The following is a 445-amino-acid chain: GTPase Der (445 aa).

2 consecutive EngA-type G domains span residues 3-167 (PVIA…YAGQ) and 180-353 (IKIA…AAAM). Residues 9–16 (GRPNVGKS), 56–60 (DTGGF), 119–122 (NKAE), 186–193 (GRPNVGKS), 233–237 (DTAGL), and 298–301 (NKWD) contribute to the GTP site. The KH-like domain occupies 354–438 (AKLPTPKLTR…PLRIEFRSSN (85 aa)).

This sequence belongs to the TRAFAC class TrmE-Era-EngA-EngB-Septin-like GTPase superfamily. EngA (Der) GTPase family. Associates with the 50S ribosomal subunit.

GTPase that plays an essential role in the late steps of ribosome biogenesis. The protein is GTPase Der of Burkholderia cenocepacia (strain HI2424).